The following is a 176-amino-acid chain: Probable inosine/xanthosine triphosphatase (176 aa).

Asp-36 contacts Mg(2+).

Belongs to the YjjX NTPase family. In terms of assembly, homodimer. It depends on Mg(2+) as a cofactor. The cofactor is Mn(2+).

It carries out the reaction XTP + H2O = XDP + phosphate + H(+). It catalyses the reaction ITP + H2O = IDP + phosphate + H(+). Its function is as follows. Phosphatase that hydrolyzes non-canonical purine nucleotides such as XTP and ITP to their respective diphosphate derivatives. Probably excludes non-canonical purines from DNA/RNA precursor pool, thus preventing their incorporation into DNA/RNA and avoiding chromosomal lesions. The chain is Probable inosine/xanthosine triphosphatase from Saccharolobus islandicus (strain Y.G.57.14 / Yellowstone #1) (Sulfolobus islandicus).